The following is a 269-amino-acid chain: Putative hydro-lyase Atu3911 (269 aa).

It belongs to the D-glutamate cyclase family.

The protein is Putative hydro-lyase Atu3911 of Agrobacterium fabrum (strain C58 / ATCC 33970) (Agrobacterium tumefaciens (strain C58)).